We begin with the raw amino-acid sequence, 161 residues long: NADH-quinone oxidoreductase subunit C (161 aa).

This sequence belongs to the complex I 30 kDa subunit family. As to quaternary structure, NDH-1 is composed of 14 different subunits. Subunits NuoB, C, D, E, F, and G constitute the peripheral sector of the complex.

Its subcellular location is the cell inner membrane. It catalyses the reaction a quinone + NADH + 5 H(+)(in) = a quinol + NAD(+) + 4 H(+)(out). Its function is as follows. NDH-1 shuttles electrons from NADH, via FMN and iron-sulfur (Fe-S) centers, to quinones in the respiratory chain. The immediate electron acceptor for the enzyme in this species is believed to be ubiquinone. Couples the redox reaction to proton translocation (for every two electrons transferred, four hydrogen ions are translocated across the cytoplasmic membrane), and thus conserves the redox energy in a proton gradient. This Citrifermentans bemidjiense (strain ATCC BAA-1014 / DSM 16622 / JCM 12645 / Bem) (Geobacter bemidjiensis) protein is NADH-quinone oxidoreductase subunit C.